A 618-amino-acid polypeptide reads, in one-letter code: ELMO domain-containing protein C (618 aa).

A coiled-coil region spans residues methionine 1–phenylalanine 72. Disordered regions lie at residues asparagine 153–leucine 175 and threonine 245–valine 276. 2 stretches are compositionally biased toward low complexity: residues asparagine 156–asparagine 171 and threonine 245–threonine 275. The region spanning aspartate 382–serine 545 is the ELMO domain. Low complexity-rich tracts occupy residues glutamine 574–proline 592 and threonine 602–asparagine 618. Residues glutamine 574 to asparagine 618 are disordered.

This chain is ELMO domain-containing protein C (elmoC), found in Dictyostelium discoideum (Social amoeba).